Here is a 231-residue protein sequence, read N- to C-terminus: Large ribosomal subunit protein uL1 (231 aa).

This sequence belongs to the universal ribosomal protein uL1 family. As to quaternary structure, part of the 50S ribosomal subunit.

Binds directly to 23S rRNA. The L1 stalk is quite mobile in the ribosome, and is involved in E site tRNA release. Functionally, protein L1 is also a translational repressor protein, it controls the translation of the L11 operon by binding to its mRNA. The protein is Large ribosomal subunit protein uL1 of Acinetobacter baumannii (strain AB0057).